The following is a 908-amino-acid chain: NADH-quinone oxidoreductase subunit G (908 aa).

Residues 2 to 83 enclose the 2Fe-2S ferredoxin-type domain; that stretch reads ATIHVDGKEY…GTFISIDDEE (82 aa). Residues Cys34, Cys45, Cys48, and Cys67 each coordinate [2Fe-2S] cluster. Positions 83 to 122 constitute a 4Fe-4S His(Cys)3-ligated-type domain; the sequence is EAKQFRESVVEWLMTNHPHDCPVCEEGGNCHLQDMTVMTG. [4Fe-4S] cluster is bound by residues His99, Cys103, Cys106, Cys112, Cys151, Cys154, Cys157, Cys201, Cys228, Cys231, Cys235, and Cys263. In terms of domain architecture, 4Fe-4S Mo/W bis-MGD-type spans 221–277; that stretch reads MQFAPSICQQCSIGCNISPGERYGELRRIENRYNGTVNHYFLCDRGRFGYGYVNLKD.

The protein belongs to the complex I 75 kDa subunit family. Composed of 13 different subunits. Subunits NuoCD, E, F, and G constitute the peripheral sector of the complex. [2Fe-2S] cluster is required as a cofactor. [4Fe-4S] cluster serves as cofactor.

The catalysed reaction is a quinone + NADH + 5 H(+)(in) = a quinol + NAD(+) + 4 H(+)(out). In terms of biological role, NDH-1 shuttles electrons from NADH, via FMN and iron-sulfur (Fe-S) centers, to quinones in the respiratory chain. The immediate electron acceptor for the enzyme in this species is believed to be ubiquinone. Couples the redox reaction to proton translocation (for every two electrons transferred, four hydrogen ions are translocated across the cytoplasmic membrane), and thus conserves the redox energy in a proton gradient. The sequence is that of NADH-quinone oxidoreductase subunit G (nuoG) from Shigella flexneri.